A 352-amino-acid polypeptide reads, in one-letter code: Thiamine-monophosphate kinase (352 aa).

Mg(2+) contacts are provided by aspartate 58, threonine 73, and aspartate 75. A substrate-binding site is contributed by histidine 82. Residues aspartate 103 and aspartate 151 each contribute to the Mg(2+) site. ATP is bound by residues 150 to 151 (GD) and arginine 177. Mg(2+) is bound at residue aspartate 239. Serine 241 contributes to the ATP binding site. Mg(2+) is bound at residue aspartate 242. The substrate site is built by aspartate 294 and tryptophan 349.

Belongs to the thiamine-monophosphate kinase family.

It carries out the reaction thiamine phosphate + ATP = thiamine diphosphate + ADP. It functions in the pathway cofactor biosynthesis; thiamine diphosphate biosynthesis; thiamine diphosphate from thiamine phosphate: step 1/1. In terms of biological role, catalyzes the ATP-dependent phosphorylation of thiamine-monophosphate (TMP) to form thiamine-pyrophosphate (TPP), the active form of vitamin B1. The protein is Thiamine-monophosphate kinase of Caulobacter vibrioides (strain ATCC 19089 / CIP 103742 / CB 15) (Caulobacter crescentus).